Reading from the N-terminus, the 125-residue chain is Snaclec coagulation factor IX/factor X-binding protein subunit B (125 aa).

In terms of domain architecture, C-type lectin spans Asp-1–Ser-122. 3 disulfide bridges follow: Cys-2/Cys-13, Cys-30/Cys-120, and Cys-97/Cys-112. 2 residues coordinate Ca(2+): Ser-41 and Glu-47.

It belongs to the snaclec family. In terms of assembly, heterodimer of subunits A and B; disulfide-linked. Expressed by the venom gland.

It is found in the secreted. Anticoagulant protein which binds to coagulation factor IX (F9) and coagulation factor X (F10) in the presence of calcium. It may bind the gamma-carboxyglutamic acid-domain regions of factors with a 1 to 1 stoichiometry. The dissociation constant (K(d)) are 6.6 nM for factor IX (F9) and 125 nM for factor X (F10). Does not bind carbohydrates. The chain is Snaclec coagulation factor IX/factor X-binding protein subunit B from Echis carinatus (Saw-scaled viper).